The sequence spans 262 residues: Small ribosomal subunit protein eS1 (262 aa).

This sequence belongs to the eukaryotic ribosomal protein eS1 family. Component of the small ribosomal subunit. Mature ribosomes consist of a small (40S) and a large (60S) subunit. The 40S subunit contains about 33 different proteins and 1 molecule of RNA (18S). The 60S subunit contains about 49 different proteins and 3 molecules of RNA (25S, 5.8S and 5S).

It is found in the cytoplasm. The polypeptide is Small ribosomal subunit protein eS1 (Cryptosporidium hominis).